A 233-amino-acid chain; its full sequence is Uridylate kinase (233 aa).

Residues 9–12 (KLSG), Gly51, and Arg55 each bind ATP. UMP-binding positions include Asp69 and 130–137 (TGNPFFST). Residues Asn158, Tyr164, and Asp167 each coordinate ATP.

The protein belongs to the UMP kinase family. Homohexamer.

The protein localises to the cytoplasm. It catalyses the reaction UMP + ATP = UDP + ADP. Its pathway is pyrimidine metabolism; CTP biosynthesis via de novo pathway; UDP from UMP (UMPK route): step 1/1. Inhibited by UTP. Its function is as follows. Catalyzes the reversible phosphorylation of UMP to UDP. The sequence is that of Uridylate kinase from Thermus thermophilus (strain ATCC BAA-163 / DSM 7039 / HB27).